The sequence spans 1394 residues: Ninein-like protein (1394 aa).

EF-hand domains follow at residues 8-43 (HYVSRLRDVYSSCDTTGTGFLDQEELTQLCTKLGLE) and 42-77 (LEEQLPALLHILLGDDRLARVNFEEFKEGFVAVLSS). Disordered stretches follow at residues 77–99 (SGSGVEPSDEEGSSSESATSCAV) and 126–166 (KYGS…KEPQ). At Ser-149 the chain carries Phosphoserine. The span at 151-166 (ESLKSDEDAESAKEPQ) shows a compositional bias: basic and acidic residues. EF-hand domains lie at 197–232 (TPENLVQGIWHELGIGSSGHLNEQELAVVCRSIGLH) and 234–269 (LEKQELEELFSKLDQDGDGRVSLAEFQLGLFGHEPP). Residues Asp-247, Asp-249, Asp-251, Arg-253, and Glu-258 each contribute to the Ca(2+) site. Coiled-coil stretches lie at residues 382–423 (RQEL…MDDC), 461–515 (WEQA…DSEK), and 544–584 (EQFT…SRQS). The KEN box signature appears at 494-496 (KEN). The segment at 578-602 (LPRSRQSPAGTPGTHRRRIPGRGPA) is disordered. The D-box signature appears at 632-640 (RMQLETKVN). Residues 835 to 863 (EKEKLEQTYREQVEGLVQEADVLRALLKN) are a coiled coil. The span at 866–893 (TVVSDQQERTPSSMSLGPDSRQQPTARQ) shows a compositional bias: polar residues. Residues 866-977 (TVVSDQQERT…SARTLTGQGQ (112 aa)) form a disordered region. A compositionally biased stretch (basic and acidic residues) spans 939–951 (RSSENLGVRDNHQ). Coiled coils occupy residues 1057–1229 (SESE…ELTE) and 1269–1331 (GARV…LRKQ).

As to quaternary structure, interacts with gamma-tubulin and TUBGCP4. Interacts with anaphase promoting complex/cyclosome (APC/C). Interacts with CDC20 and FZR1. Interacts with LCA5 and USH2A. Phosphorylated by PLK1 which disrupts its centrosome association and interaction with gamma-tubulin. In terms of processing, ubiquitinated by the APC/C complex leading to its degradation.

It localises to the cytoplasm. Its subcellular location is the cytoskeleton. The protein localises to the microtubule organizing center. The protein resides in the centrosome. Its function is as follows. Involved in the microtubule organization in interphase cells. Overexpression induces the fragmentation of the Golgi, and causes lysosomes to disperse toward the cell periphery; it also interferes with mitotic spindle assembly. Involved in vesicle transport in photoreceptor cells. The polypeptide is Ninein-like protein (Ninl) (Mus musculus (Mouse)).